Consider the following 84-residue polypeptide: Small ribosomal subunit protein bS20 (84 aa).

Belongs to the bacterial ribosomal protein bS20 family.

Binds directly to 16S ribosomal RNA. In Parabacteroides distasonis (strain ATCC 8503 / DSM 20701 / CIP 104284 / JCM 5825 / NCTC 11152), this protein is Small ribosomal subunit protein bS20.